A 106-amino-acid chain; its full sequence is Cell division topological specificity factor (106 aa).

The protein belongs to the MinE family.

In terms of biological role, prevents the cell division inhibition by proteins MinC and MinD at internal division sites while permitting inhibition at polar sites. This ensures cell division at the proper site by restricting the formation of a division septum at the midpoint of the long axis of the cell. This is Cell division topological specificity factor from Prochlorococcus marinus (strain SARG / CCMP1375 / SS120).